We begin with the raw amino-acid sequence, 760 residues long: DEAD-box ATP-dependent RNA helicase 24 (760 aa).

2 disordered regions span residues 1–76 (MSNR…GEVD) and 90–113 (QEMKSAPPPKPKEKLERYKDDDDD). The segment covering 14–27 (NRQTSYSFERSQAP) has biased composition (polar residues). Over residues 41-64 (NSEDADLDNIDYMENEEAEEDIEE) the composition is skewed to acidic residues. The span at 99 to 109 (KPKEKLERYKD) shows a compositional bias: basic and acidic residues. A Phosphoserine modification is found at serine 160. The short motif at 228-256 (KTFEDCGFSSQIMSAIKKQAYEKPTAIQC) is the Q motif element. Residues 259–434 (LPIVLSGRDV…REILSDPIRV (176 aa)) enclose the Helicase ATP-binding domain. Position 272 to 279 (272 to 279 (AKTGSGKT)) interacts with ATP. Residues 382–385 (DEAD) carry the DEAD box motif. The 150-residue stretch at 459–608 (KLPWLLEKLP…NVPPELTDLA (150 aa)) folds into the Helicase C-terminal domain. Disordered stretches follow at residues 604-638 (LTDLAMKDGRFKSKRDGRKGGKKGRGGGGGNKGVR), 647-666 (GFSSESSRTPSSKAAPSRSG), and 706-760 (FVSG…GWDN). Residues 615 to 628 (KSKRDGRKGGKKGR) are compositionally biased toward basic residues. The segment covering 629-638 (GGGGGNKGVR) has biased composition (gly residues). Over residues 649 to 666 (SSESSRTPSSKAAPSRSG) the composition is skewed to polar residues. A compositionally biased stretch (gly residues) spans 707–716 (VSGGTIGGDM). Positions 718 to 732 (RTQSQAPPVAPTQNA) are enriched in polar residues. The span at 733 to 745 (SSHNSSQNHSQSS) shows a compositional bias: low complexity. Basic residues predominate over residues 750–760 (RERKRRSGWDN).

It belongs to the DEAD box helicase family.

It catalyses the reaction ATP + H2O = ADP + phosphate + H(+). This is DEAD-box ATP-dependent RNA helicase 24 (RH24) from Arabidopsis thaliana (Mouse-ear cress).